The following is a 254-amino-acid chain: Adenosylcobinamide-GDP ribazoletransferase (254 aa).

Transmembrane regions (helical) follow at residues 27–47 (SSLY…VLLA), 50–70 (GMGV…GLIL), 104–124 (VGSF…ICLL), 131–151 (AYGM…LLAA), 170–190 (AGWP…FVLL), 194–214 (LAPS…VGWL), and 233–253 (LVEA…FWAI).

It belongs to the CobS family. Requires Mg(2+) as cofactor.

The protein resides in the cell inner membrane. The enzyme catalyses alpha-ribazole + adenosylcob(III)inamide-GDP = adenosylcob(III)alamin + GMP + H(+). It carries out the reaction alpha-ribazole 5'-phosphate + adenosylcob(III)inamide-GDP = adenosylcob(III)alamin 5'-phosphate + GMP + H(+). It functions in the pathway cofactor biosynthesis; adenosylcobalamin biosynthesis; adenosylcobalamin from cob(II)yrinate a,c-diamide: step 7/7. In terms of biological role, joins adenosylcobinamide-GDP and alpha-ribazole to generate adenosylcobalamin (Ado-cobalamin). Also synthesizes adenosylcobalamin 5'-phosphate from adenosylcobinamide-GDP and alpha-ribazole 5'-phosphate. In Chlorobaculum tepidum (strain ATCC 49652 / DSM 12025 / NBRC 103806 / TLS) (Chlorobium tepidum), this protein is Adenosylcobinamide-GDP ribazoletransferase.